The primary structure comprises 397 residues: Linalool dehydratase/isomerase (397 aa).

The N-terminal stretch at 1 to 26 (MRFTLKTTAIVSAAALLAGFGPPPRA) is a signal peptide. Residue D64 is the Proton donor/acceptor of the active site. 2 disulfides stabilise this stretch: C74-C127 and C196-C205. (2E)-geraniol is bound at residue C196.

Homotetramer. Homopentamer.

It localises to the periplasm. The enzyme catalyses (S)-linalool = beta-myrcene + H2O. It catalyses the reaction (2E)-geraniol = (S)-linalool. The protein operates within terpene metabolism; monoterpene degradation. With respect to regulation, is inhibited by molecular oxygen, high salt concentrations (NaCl, KCl, or MgCl(2)), urea, and Ti(III)citrate. Activity is not affected by EDTA. Anaerobically catalyzes the stereospecific hydration of beta-myrcene to (3S)-linalool and the isomerization of (3S)-linalool to geraniol. Is thus involved in the initial steps of the anaerobic degradation of the monoterpene beta-myrcene. Also catalyzes the reverse reactions, i.e. the isomerization of geraniol to linalool and the dehydration of linalool to myrcene. In this direction, the formation of myrcene from geraniol may be seen as a detoxification process for the monoterpene alcohol. Shows a relatively broad substrate specificity and can use various geraniol and linalool derivatives. Substrates required a specific alpha-methylallyl alcohol signature motif. Neither the monoterpenes alpha- and beta-ocimene nor the monoterpenoids citronellol and nerol can be used as substrates. The sequence is that of Linalool dehydratase/isomerase from Castellaniella defragrans (strain DSM 12143 / CCUG 39792 / 65Phen) (Alcaligenes defragrans).